The sequence spans 122 residues: Flagellar hook-basal body complex protein FliE (122 aa).

Belongs to the FliE family.

Its subcellular location is the bacterial flagellum basal body. This is Flagellar hook-basal body complex protein FliE from Marinobacter nauticus (strain ATCC 700491 / DSM 11845 / VT8) (Marinobacter aquaeolei).